We begin with the raw amino-acid sequence, 239 residues long: 4-hydroxy-tetrahydrodipicolinate reductase (239 aa).

NAD(+) contacts are provided by residues 8–13, 78–80, and 102–105; these read GSTGKM, GTT, and SANM. The active-site Proton donor/acceptor is the His-134. Residue His-135 participates in (S)-2,3,4,5-tetrahydrodipicolinate binding. The Proton donor role is filled by Lys-138. (S)-2,3,4,5-tetrahydrodipicolinate is bound at residue 144-145; the sequence is GT.

This sequence belongs to the DapB family.

Its subcellular location is the cytoplasm. It catalyses the reaction (S)-2,3,4,5-tetrahydrodipicolinate + NAD(+) + H2O = (2S,4S)-4-hydroxy-2,3,4,5-tetrahydrodipicolinate + NADH + H(+). The enzyme catalyses (S)-2,3,4,5-tetrahydrodipicolinate + NADP(+) + H2O = (2S,4S)-4-hydroxy-2,3,4,5-tetrahydrodipicolinate + NADPH + H(+). It participates in amino-acid biosynthesis; L-lysine biosynthesis via DAP pathway; (S)-tetrahydrodipicolinate from L-aspartate: step 4/4. Its function is as follows. Catalyzes the conversion of 4-hydroxy-tetrahydrodipicolinate (HTPA) to tetrahydrodipicolinate. In Rickettsia conorii (strain ATCC VR-613 / Malish 7), this protein is 4-hydroxy-tetrahydrodipicolinate reductase.